Reading from the N-terminus, the 290-residue chain is Probable lipid hydrolase 463L (290 aa).

2 consecutive transmembrane segments (helical) span residues 26-46 (TLVLSGGAMRGVYLLGALNGL) and 53-73 (ISTFIGISSGSIICFLLSIGY). The 181-residue stretch at 27–207 (LVLSGGAMRG…WNNFPIDIAI (181 aa)) folds into the PNPLA domain. The GXSXG signature appears at 58-62 (GISSG). The active-site Nucleophile is the Ser60. The Proton acceptor role is filled by Asp194. A DGA/G motif is present at residues 194 to 196 (DGG).

Its subcellular location is the membrane. Probable lipid hydrolase. The protein is Probable lipid hydrolase 463L of Invertebrate iridescent virus 6 (IIV-6).